A 345-amino-acid polypeptide reads, in one-letter code: Platelet-derived growth factor C (345 aa).

Residues M1 to A22 form the signal peptide. A compositionally biased stretch (polar residues) spans S24–S33. The tract at residues S24–R45 is disordered. N25 carries an N-linked (GlcNAc...) asparagine glycan. A compositionally biased stretch (basic and acidic residues) spans S34–R45. The CUB domain occupies H46–I163. Residue N55 is glycosylated (N-linked (GlcNAc...) asparagine). 4 disulfides stabilise this stretch: C104/C124, C250/C294, C280/C335, and C287/C337.

Belongs to the PDGF/VEGF growth factor family. Homodimer; disulfide-linked. Interacts with PDGFRA homodimers, and with heterodimers formed by PDGFRA and PDGFRB. Interacts (via CUB domain) with PLAT (via kringle domain). Post-translationally, proteolytic removal of the N-terminal CUB domain releasing the core domain is necessary for unmasking the receptor-binding epitopes of the core domain. Cleavage after basic residues in the hinge region (region connecting the CUB and growth factor domains) gives rise to the receptor-binding form. Cleaved by PLAT and PLG. Sumoylated by SUMO1. In terms of processing, N-glycosylated. Mainly expressed in kidney, testis, liver, heart and brain (at protein level). Highly expressed in airway epithelium, interstitial cells and alveolar macrophages in the lung of mice overexpressing IL13. Expressed in the ovaries.

It localises to the cytoplasm. The protein localises to the cytosol. The protein resides in the secreted. It is found in the nucleus. Its subcellular location is the cytoplasmic granule. It localises to the cell membrane. Growth factor that plays an essential role in the regulation of embryonic development, cell proliferation, cell migration, survival and chemotaxis. Potent mitogen and chemoattractant for cells of mesenchymal origin. Required for normal skeleton formation during embryonic development, especially for normal development of the craniofacial skeleton and for normal development of the palate. Required for normal skin morphogenesis during embryonic development. Plays an important role in wound healing, where it appears to be involved in three stages: inflammation, proliferation and remodeling. Plays an important role in angiogenesis and blood vessel development. Involved in fibrotic processes, in which transformation of interstitial fibroblasts into myofibroblasts plus collagen deposition occurs. The CUB domain has mitogenic activity in coronary artery smooth muscle cells, suggesting a role beyond the maintenance of the latency of the PDGF domain. In the nucleus, PDGFC seems to have additional function. This Mus musculus (Mouse) protein is Platelet-derived growth factor C (Pdgfc).